Here is a 444-residue protein sequence, read N- to C-terminus: Tubulin beta chain (444 aa).

GTP contacts are provided by Gln11, Glu69, Ser138, Gly142, Thr143, Gly144, Asn204, and Asn226. Residue Glu69 coordinates Mg(2+).

It belongs to the tubulin family. As to quaternary structure, dimer of alpha and beta chains. A typical microtubule is a hollow water-filled tube with an outer diameter of 25 nm and an inner diameter of 15 nM. Alpha-beta heterodimers associate head-to-tail to form protofilaments running lengthwise along the microtubule wall with the beta-tubulin subunit facing the microtubule plus end conferring a structural polarity. Microtubules usually have 13 protofilaments but different protofilament numbers can be found in some organisms and specialized cells. It depends on Mg(2+) as a cofactor.

It localises to the cytoplasm. The protein resides in the cytoskeleton. Tubulin is the major constituent of microtubules, a cylinder consisting of laterally associated linear protofilaments composed of alpha- and beta-tubulin heterodimers. Microtubules grow by the addition of GTP-tubulin dimers to the microtubule end, where a stabilizing cap forms. Below the cap, tubulin dimers are in GDP-bound state, owing to GTPase activity of alpha-tubulin. The sequence is that of Tubulin beta chain from Phytophthora cinnamomi (Cinnamon fungus).